Reading from the N-terminus, the 206-residue chain is Holliday junction branch migration complex subunit RuvA (206 aa).

The tract at residues 1 to 64 (MIGKLKGVLD…EDMIRLYGFR (64 aa)) is domain I. The tract at residues 65 to 144 (TVLEREWFRL…AFAGEAAGAI (80 aa)) is domain II. A flexible linker region spans residues 145 to 154 (GLKQDLGEGV). A domain III region spans residues 154–206 (VAPAPVSDAVSALANLGYSRDIAANAVAAALKSAGEGADTGTLIRLGLKELAR).

The protein belongs to the RuvA family. As to quaternary structure, homotetramer. Forms an RuvA(8)-RuvB(12)-Holliday junction (HJ) complex. HJ DNA is sandwiched between 2 RuvA tetramers; dsDNA enters through RuvA and exits via RuvB. An RuvB hexamer assembles on each DNA strand where it exits the tetramer. Each RuvB hexamer is contacted by two RuvA subunits (via domain III) on 2 adjacent RuvB subunits; this complex drives branch migration. In the full resolvosome a probable DNA-RuvA(4)-RuvB(12)-RuvC(2) complex forms which resolves the HJ.

The protein localises to the cytoplasm. In terms of biological role, the RuvA-RuvB-RuvC complex processes Holliday junction (HJ) DNA during genetic recombination and DNA repair, while the RuvA-RuvB complex plays an important role in the rescue of blocked DNA replication forks via replication fork reversal (RFR). RuvA specifically binds to HJ cruciform DNA, conferring on it an open structure. The RuvB hexamer acts as an ATP-dependent pump, pulling dsDNA into and through the RuvAB complex. HJ branch migration allows RuvC to scan DNA until it finds its consensus sequence, where it cleaves and resolves the cruciform DNA. The chain is Holliday junction branch migration complex subunit RuvA from Chelativorans sp. (strain BNC1).